The chain runs to 537 residues: DELLA protein GAI (537 aa).

A disordered region spans residues 1–33; the sequence is MKRDHQEISGSGSNPAESSSIKGKLWEEDPDAG. The segment covering 9–20 has biased composition (low complexity); sequence SGSGSNPAESSS. Positions 37-41 match the DELLA motif motif; that stretch reads DELLA. Positions 131–157 are disordered; it reads KSDPGLEITRKRAKTESSSSSSSTTTR. Residues 147 to 156 are compositionally biased toward low complexity; the sequence is SSSSSSSTTT. Residues 162–533 enclose the GRAS domain; that stretch reads IDSQEAGVRL…RPLIAHLGLA (372 aa). Positions 169 to 223 are leucine repeat I (LRI); that stretch reads VRLVHTLMACAEAVQQDNLKLADALVKHIGLLASSQTGAMRKVATYFAEALARRI. Residues 241 to 306 form a VHIID region; sequence QIPFYETCPY…GGPPAFRLTG (66 aa). The VHIID signature appears at 272 to 276; it reads VHVID. The segment at 320-352 is leucine repeat II (LRII); it reads QVGWKLAQLAERIGIEFEFRGFVANSLADLEPE. Residues 364-454 form a PFYRE region; it reads VAVNAVFELH…ELYLGRQICN (91 aa). Positions 372 to 376 match the LXXLL motif motif; the sequence is LHPLL. The segment at 457–533 is SAW; sequence ACEGMDRVER…RPLIAHLGLA (77 aa).

This sequence belongs to the GRAS family. DELLA subfamily. In terms of processing, phosphorylated. Ubiquitinated. Upon GA application it is ubiquitinated, leading to its subsequent degradation.

It localises to the nucleus. Probable transcriptional regulator that acts as a repressor of the gibberellin (GA) signaling pathway. Probably acts by participating in large multiprotein complexes that represses transcription of GA-inducible genes. Upon GA application, it is degraded by the proteasome, allowing the GA signaling pathway. The chain is DELLA protein GAI (GAI) from Gossypium hirsutum (Upland cotton).